A 434-amino-acid polypeptide reads, in one-letter code: Tryptophan synthase beta chain (434 aa).

Lysine 92 is modified (N6-(pyridoxal phosphate)lysine). Residues 411–434 (VKGGVATSPESFDASGAKGAGSQS) are disordered.

It belongs to the TrpB family. As to quaternary structure, tetramer of two alpha and two beta chains. Pyridoxal 5'-phosphate is required as a cofactor.

The enzyme catalyses (1S,2R)-1-C-(indol-3-yl)glycerol 3-phosphate + L-serine = D-glyceraldehyde 3-phosphate + L-tryptophan + H2O. The protein operates within amino-acid biosynthesis; L-tryptophan biosynthesis; L-tryptophan from chorismate: step 5/5. The beta subunit is responsible for the synthesis of L-tryptophan from indole and L-serine. The chain is Tryptophan synthase beta chain from Polaromonas naphthalenivorans (strain CJ2).